The primary structure comprises 398 residues: Mu-type opioid receptor (398 aa).

Over 1–66 (MDSSAGPGNI…CPQTGSPSMV (66 aa)) the chain is Extracellular. Asn-9, Asn-31, Asn-38, and Asn-46 each carry an N-linked (GlcNAc...) asparagine glycan. Residues 67-91 (TAITIMALYSIVCVVGLFGNFLVMY) form a helical membrane-spanning segment. The Cytoplasmic segment spans residues 92–104 (VIVRYTKMKTATN). Residues 105 to 129 (IYIFNLALADALATSTLPFQSVNYL) traverse the membrane as a helical segment. Residues 130–140 (MGTWPFGNILC) are Extracellular-facing. A disulfide bond links Cys-140 and Cys-217. The helical transmembrane segment at 141–163 (KIVISIDYYNMFTSIFTLCTMSV) threads the bilayer. Topologically, residues 164 to 183 (DRYIAVCHPVKALDFRTPRN) are cytoplasmic. Tyr-166 carries the post-translational modification Phosphotyrosine. Residues 184-205 (AKIVNVCNWILSSAIGLPVMFM) traverse the membrane as a helical segment. Over 206–228 (ATTKYRQGSIDCTLTFSHPTWYW) the chain is Extracellular. The helical transmembrane segment at 229–253 (ENLLKICVFIFAFIMPVLIITVCYG) threads the bilayer. Residues 254-277 (LMILRLKSVRMLSGSKEKDRNLRR) lie on the Cytoplasmic side of the membrane. A helical membrane pass occupies residues 278-304 (ITRMVLVVVAVFIVCWTPIHIYVIIKA). Over 305-312 (LITIPETT) the chain is Extracellular. The helical transmembrane segment at 313 to 336 (FQTVSWHFCIALGYTNSCLNPVLY) threads the bilayer. The NPxxY; plays a role in stabilizing the activated conformation of the receptor signature appears at 332–336 (NPVLY). The Cytoplasmic portion of the chain corresponds to 337 to 398 (AFLDENFKRC…NLEAETAPLP (62 aa)). Cys-351 is lipidated: S-palmitoyl cysteine. The segment at 362–383 (NSARIRQNTREHPSTANTVDRT) is disordered. Ser-363 carries the phosphoserine modification. The residue at position 370 (Thr-370) is a Phosphothreonine. Ser-375 carries the post-translational modification Phosphoserine. Thr-394 carries the post-translational modification Phosphothreonine.

Belongs to the G-protein coupled receptor 1 family. Forms homooligomers and heterooligomers with other GPCRs, such as OPRD1, OPRK1, OPRL1, NPFFR2, ADRA2A, SSTR2, CNR1 and CCR5 (probably in dimeric forms). Interacts with heterotrimeric G proteins; interaction with a heterotrimeric complex containing GNAI1, GNB1 and GNG2 stabilizes the active conformation of the receptor and increases its affinity for endomorphin-2, the synthetic opioid peptide DAMGO and for morphinan agonists. Interacts with PPL; the interaction disrupts agonist-mediated G-protein activation. Interacts (via C-terminus) with DNAJB4 (via C-terminus). Interacts with calmodulin; the interaction inhibits the constitutive activity of OPRM1; it abolishes basal and attenuates agonist-stimulated G-protein coupling. Interacts with FLNA, PLD2, RANBP9 and WLS and GPM6A. Interacts with RTP4. Interacts with SYP and GNAS. Interacts with RGS9, RGS17, RGS20, RGS4, PPP1R9B and HINT1. Isoform 9 interacts with GRPR. Post-translationally, phosphorylated. Differentially phosphorylated in basal and agonist-induced conditions. Agonist-mediated phosphorylation modulates receptor internalization. Phosphorylated by GRK2 in a agonist-dependent manner. Phosphorylation at Tyr-166 requires receptor activation, is dependent on non-receptor protein tyrosine kinase Src and results in a decrease in agonist efficacy by reducing G-protein coupling efficiency. Phosphorylated on tyrosine residues; the phosphorylation is involved in agonist-induced G-protein-independent receptor down-regulation. Phosphorylation at Ser-375 is involved in G-protein-dependent but not beta-arrestin-dependent activation of the ERK pathway. In terms of processing, ubiquitinated. A basal ubiquitination seems not to be related to degradation. Ubiquitination is increased upon formation of OPRM1:OPRD1 oligomers leading to proteasomal degradation; the ubiquitination is diminished by RTP4.

Its subcellular location is the cell membrane. It is found in the cell projection. The protein resides in the axon. The protein localises to the perikaryon. It localises to the dendrite. Its subcellular location is the endosome. Receptor for endogenous opioids such as beta-endorphin and endomorphin. Receptor for natural and synthetic opioids including morphine, heroin, DAMGO, fentanyl, etorphine, buprenorphin and methadone. Also activated by enkephalin peptides, such as Met-enkephalin or Met-enkephalin-Arg-Phe, with higher affinity for Met-enkephalin-Arg-Phe. Agonist binding to the receptor induces coupling to an inactive GDP-bound heterotrimeric G-protein complex and subsequent exchange of GDP for GTP in the G-protein alpha subunit leading to dissociation of the G-protein complex with the free GTP-bound G-protein alpha and the G-protein beta-gamma dimer activating downstream cellular effectors. The agonist- and cell type-specific activity is predominantly coupled to pertussis toxin-sensitive G(i) and G(o) G alpha proteins, GNAI1, GNAI2, GNAI3 and GNAO1 isoforms Alpha-1 and Alpha-2, and to a lesser extent to pertussis toxin-insensitive G alpha proteins GNAZ and GNA15. They mediate an array of downstream cellular responses, including inhibition of adenylate cyclase activity and both N-type and L-type calcium channels, activation of inward rectifying potassium channels, mitogen-activated protein kinase (MAPK), phospholipase C (PLC), phosphoinositide/protein kinase (PKC), phosphoinositide 3-kinase (PI3K) and regulation of NF-kappa-B. Also couples to adenylate cyclase stimulatory G alpha proteins. The selective temporal coupling to G-proteins and subsequent signaling can be regulated by RGSZ proteins, such as RGS9, RGS17 and RGS4. Phosphorylation by members of the GPRK subfamily of Ser/Thr protein kinases and association with beta-arrestins is involved in short-term receptor desensitization. Beta-arrestins associate with the GPRK-phosphorylated receptor and uncouple it from the G-protein thus terminating signal transduction. The phosphorylated receptor is internalized through endocytosis via clathrin-coated pits which involves beta-arrestins. The activation of the ERK pathway occurs either in a G-protein-dependent or a beta-arrestin-dependent manner and is regulated by agonist-specific receptor phosphorylation. Acts as a class A G-protein coupled receptor (GPCR) which dissociates from beta-arrestin at or near the plasma membrane and undergoes rapid recycling. Receptor down-regulation pathways are varying with the agonist and occur dependent or independent of G-protein coupling. Endogenous ligands induce rapid desensitization, endocytosis and recycling. Heterooligomerization with other GPCRs can modulate agonist binding, signaling and trafficking properties. In terms of biological role, isoform 9 is involved in morphine-induced scratching and seems to cross-activate GRPR in response to morphine. This Mus musculus (Mouse) protein is Mu-type opioid receptor (Oprm1).